The chain runs to 92 residues: Small ribosomal subunit protein uS19c (92 aa).

It belongs to the universal ribosomal protein uS19 family.

It is found in the plastid. Protein S19 forms a complex with S13 that binds strongly to the 16S ribosomal RNA. This chain is Small ribosomal subunit protein uS19c, found in Cuscuta obtusiflora (Peruvian dodder).